Here is a 125-residue protein sequence, read N- to C-terminus: NADPH-dependent 7-cyano-7-deazaguanine reductase (125 aa).

The Thioimide intermediate role is filled by C41. Catalysis depends on D48, which acts as the Proton donor. Substrate-binding positions include 63–65 and 82–83; these read VEL and HE.

This sequence belongs to the GTP cyclohydrolase I family. QueF type 1 subfamily.

It is found in the cytoplasm. The enzyme catalyses 7-aminomethyl-7-carbaguanine + 2 NADP(+) = 7-cyano-7-deazaguanine + 2 NADPH + 3 H(+). The protein operates within tRNA modification; tRNA-queuosine biosynthesis. Catalyzes the NADPH-dependent reduction of 7-cyano-7-deazaguanine (preQ0) to 7-aminomethyl-7-deazaguanine (preQ1). This chain is NADPH-dependent 7-cyano-7-deazaguanine reductase, found in Sulfurimonas denitrificans (strain ATCC 33889 / DSM 1251) (Thiomicrospira denitrificans (strain ATCC 33889 / DSM 1251)).